The chain runs to 1190 residues: DNA-directed RNA polymerase subunit beta (1190 aa).

This sequence belongs to the RNA polymerase beta chain family. The RNAP catalytic core consists of 2 alpha, 1 beta, 1 beta' and 1 omega subunit. When a sigma factor is associated with the core the holoenzyme is formed, which can initiate transcription.

It catalyses the reaction RNA(n) + a ribonucleoside 5'-triphosphate = RNA(n+1) + diphosphate. Its function is as follows. DNA-dependent RNA polymerase catalyzes the transcription of DNA into RNA using the four ribonucleoside triphosphates as substrates. The polypeptide is DNA-directed RNA polymerase subunit beta (Geobacillus thermodenitrificans (strain NG80-2)).